The chain runs to 370 residues: Cyclic dehypoxanthine futalosine synthase (370 aa).

Positions Thr-50–Glu-295 constitute a Radical SAM core domain. [4Fe-4S] cluster contacts are provided by Cys-64, Cys-68, and Cys-71.

Belongs to the radical SAM superfamily. MqnC family. [4Fe-4S] cluster is required as a cofactor.

The catalysed reaction is dehypoxanthine futalosine + S-adenosyl-L-methionine = cyclic dehypoxanthinylfutalosinate + 5'-deoxyadenosine + L-methionine + H(+). The protein operates within quinol/quinone metabolism; menaquinone biosynthesis. Radical SAM enzyme that catalyzes the cyclization of dehypoxanthine futalosine (DHFL) into cyclic dehypoxanthine futalosine (CDHFL), a step in the biosynthesis of menaquinone (MK, vitamin K2). This Halalkalibacterium halodurans (strain ATCC BAA-125 / DSM 18197 / FERM 7344 / JCM 9153 / C-125) (Bacillus halodurans) protein is Cyclic dehypoxanthine futalosine synthase.